The primary structure comprises 439 residues: tRNA-2-methylthio-N(6)-dimethylallyladenosine synthase (439 aa).

An MTTase N-terminal domain is found at 1–117 (MKFYIRTFGC…IGNLVKRALN (117 aa)). [4Fe-4S] cluster-binding residues include cysteine 10, cysteine 46, cysteine 80, cysteine 153, cysteine 157, and cysteine 160. A Radical SAM core domain is found at 139–371 (PISKHHAWIT…MELQKRINLE (233 aa)). Residues 369 to 436 (NLEENEKYLE…PGPLYGEVVN (68 aa)) form the TRAM domain.

It belongs to the methylthiotransferase family. MiaB subfamily. In terms of assembly, monomer. It depends on [4Fe-4S] cluster as a cofactor.

It is found in the cytoplasm. The enzyme catalyses N(6)-dimethylallyladenosine(37) in tRNA + (sulfur carrier)-SH + AH2 + 2 S-adenosyl-L-methionine = 2-methylsulfanyl-N(6)-dimethylallyladenosine(37) in tRNA + (sulfur carrier)-H + 5'-deoxyadenosine + L-methionine + A + S-adenosyl-L-homocysteine + 2 H(+). Functionally, catalyzes the methylthiolation of N6-(dimethylallyl)adenosine (i(6)A), leading to the formation of 2-methylthio-N6-(dimethylallyl)adenosine (ms(2)i(6)A) at position 37 in tRNAs that read codons beginning with uridine. The chain is tRNA-2-methylthio-N(6)-dimethylallyladenosine synthase from Petrotoga mobilis (strain DSM 10674 / SJ95).